Consider the following 985-residue polypeptide: NAD kinase 2, chloroplastic (985 aa).

The transit peptide at 1–62 directs the protein to the chloroplast; the sequence is MFLCFCPCHV…KRRLRFVIRA (62 aa). The calmodulin-binding stretch occupies residues 335–380; that stretch reads APKAEQVELFASIVSDSSKRPIYVHSKEGVWRTSAMVSRWKQYMTR. Disordered regions lie at residues 389–466 and 548–615; these read SEES…PPGN and FSNG…DEAG. Basic and acidic residues-rich tracts occupy residues 390 to 399 and 413 to 429; these read EESKRREVSE and VPDE…EVDS. Residues 548-569 are compositionally biased toward polar residues; it reads FSNGNVHASDNTNKSISDNRGN.

This sequence belongs to the NAD kinase family. As to expression, expressed in leaves.

It localises to the plastid. It is found in the chloroplast. The catalysed reaction is NAD(+) + ATP = ADP + NADP(+) + H(+). Its function is as follows. Involved in chlorophyll synthesis and chloroplast protection against oxidative damage. The protein is NAD kinase 2, chloroplastic (NADK2) of Arabidopsis thaliana (Mouse-ear cress).